The sequence spans 365 residues: SWR1 complex subunit 2 (365 aa).

2 disordered regions span residues 43 to 83 (ALKE…NEKE) and 95 to 147 (PGKT…EGEK). Residues 48–74 (EHDDEYEAEREVADEFDSDFNDDEPEP) are compositionally biased toward acidic residues. Positions 99–108 (ASKKKKKKTK) are enriched in basic residues. Residues 118-132 (GDEKPGEELGNKEQE) show a composition bias toward basic and acidic residues. Coiled coils occupy residues 123–150 (GEEL…KVIR) and 184–225 (GEEK…KAIV). The span at 133–144 (EKEENEAQEDME) shows a compositional bias: acidic residues. The disordered stretch occupies residues 333 to 365 (RTKIPKSNKSFSLRSSARFLSSESEEESEEDSD). Residues 342–354 (SFSLRSSARFLSS) are compositionally biased toward low complexity. The segment covering 355–365 (ESEEESEEDSD) has biased composition (acidic residues).

It belongs to the VPS72/YL1 family. As to quaternary structure, component of the SWR1 chromatin-remodeling complex composed of at least ARP6/ESD1/SUF3, PIE1, SWC6, SWC2 and H2AZs (HTA8, HTA9, HTA11). Interacts directly with SWC6 and H2AZs, but not with ARP6.

Its function is as follows. Component of the SWR1 complex which mediates the ATP-dependent exchange of histone H2A for the H2A variant H2A.F/Z leading to transcriptional regulation of selected genes (e.g. FLC) by chromatin remodeling. This is SWR1 complex subunit 2 (SWC2) from Arabidopsis thaliana (Mouse-ear cress).